We begin with the raw amino-acid sequence, 240 residues long: Sugar fermentation stimulation protein homolog (240 aa).

The protein belongs to the SfsA family.

This is Sugar fermentation stimulation protein homolog from Saccharolobus islandicus (strain M.14.25 / Kamchatka #1) (Sulfolobus islandicus).